We begin with the raw amino-acid sequence, 101 residues long: NADH-quinone oxidoreductase subunit K (101 aa).

The next 3 helical transmembrane spans lie at 4–24, 29–49, and 65–85; these read VGHY…GIFI, IIVI…NLVA, and FVLT…VIYF.

It belongs to the complex I subunit 4L family. NDH-1 is composed of 14 different subunits. Subunits NuoA, H, J, K, L, M, N constitute the membrane sector of the complex.

It is found in the cell inner membrane. The catalysed reaction is a quinone + NADH + 5 H(+)(in) = a quinol + NAD(+) + 4 H(+)(out). Its function is as follows. NDH-1 shuttles electrons from NADH, via FMN and iron-sulfur (Fe-S) centers, to quinones in the respiratory chain. The immediate electron acceptor for the enzyme in this species is believed to be ubiquinone. Couples the redox reaction to proton translocation (for every two electrons transferred, four hydrogen ions are translocated across the cytoplasmic membrane), and thus conserves the redox energy in a proton gradient. The chain is NADH-quinone oxidoreductase subunit K from Sphingopyxis alaskensis (strain DSM 13593 / LMG 18877 / RB2256) (Sphingomonas alaskensis).